We begin with the raw amino-acid sequence, 178 residues long: Female-specific protein transformer (178 aa).

2 stretches are compositionally biased toward basic and acidic residues: residues 1 to 18 (MKMDADSSCGADHRDSHG) and 25 to 40 (REREQHGRTSNRDSKK). Residues 1-117 (MKMDADSSCG…RRYNPPPKII (117 aa)) are disordered. Composition is skewed to basic residues over residues 59-73 (RRLRKRSPRSTRRSA) and 81-108 (RRHRHRSRSRNRSRSRSSERRRRQRSPR).

The protein resides in the nucleus speckle. Its function is as follows. Member of the regulatory pathway controlling female somatic sexual differentiation, regulated by Sxl. Activates dsx female-specific splicing by promoting the formation of a splicing enhancer complex which consists of tra, tra2 and sr proteins. The sequence is that of Female-specific protein transformer (tra) from Drosophila erecta (Fruit fly).